The primary structure comprises 214 residues: Inner membrane-spanning protein YciB (214 aa).

The next 5 membrane-spanning stretches (helical) occupy residues 11–31 (ILFFIAFKLYGIYVATAVAII), 50–70 (MHIITLALIVILGGATLILQD), 81–101 (VNWGFALVFLGSHFIGQKPII), 119–139 (LSYMWIAFFIFSGIANIYVAY), and 149–169 (FKLFGLMGLTLAFILIQGVYI).

The protein belongs to the YciB family.

Its subcellular location is the cell inner membrane. Its function is as follows. Plays a role in cell envelope biogenesis, maintenance of cell envelope integrity and membrane homeostasis. This chain is Inner membrane-spanning protein YciB, found in Hydrogenovibrio crunogenus (strain DSM 25203 / XCL-2) (Thiomicrospira crunogena).